The chain runs to 235 residues: Chalcone--flavanone isomerase 1 (235 aa).

Substrate contacts are provided by Thr50 and Ser192.

It belongs to the chalcone isomerase family.

It catalyses the reaction a chalcone = a flavanone.. Its pathway is secondary metabolite biosynthesis; flavonoid biosynthesis. In terms of biological role, catalyzes the intramolecular cyclization of bicyclic chalcones into tricyclic (S)-flavanones. Responsible for the isomerization of 4,2',4',6'-tetrahydroxychalcone (also termed chalcone) into naringenin. This chain is Chalcone--flavanone isomerase 1 (CHI1), found in Chrysanthemum morifolium (Florist's daisy).